A 639-amino-acid chain; its full sequence is Putative oxidoreductase UacF (639 aa).

4Fe-4S ferredoxin-type domains follow at residues 3–32 (KFIAAEAAECIGCHACEIACAVAHNQENWP), 47–77 (KGQAANPVACHHCNNAPCVTACPVNALTFQS), 78–107 (DSVQLDEQKCIGCKRCAIACPFGVVEMVDT), 110–139 (QKCDLCNQRSSGTQACIEVCPTQALRLMDD), and 201–235 (QQATYESDRCVYCAEKANCNWHCPLHNAIPDYIRL). The [4Fe-4S] cluster site is built by Cys12, Cys15, Cys18, Cys22, Cys56, Cys59, Cys64, Cys68, Cys87, Cys90, Cys93, Cys97, Cys112, Cys115, Cys125, Cys129, Cys210, Cys213, Cys219, and Cys223.

[4Fe-4S] cluster is required as a cofactor.

Involved in formate-dependent uric acid degradation under microaerobic and anaerobic conditions. May reduce the enzymes necessary for uric acid degradation. This Escherichia coli (strain K12) protein is Putative oxidoreductase UacF.